Reading from the N-terminus, the 301-residue chain is tRNA dimethylallyltransferase (301 aa).

2–9 (GPTASGKT) serves as a coordination point for ATP. Residue 4 to 9 (TASGKT) coordinates substrate. Interaction with substrate tRNA regions lie at residues 27 to 30 (DSAM) and 151 to 155 (QRIQR).

It belongs to the IPP transferase family. In terms of assembly, monomer. Requires Mg(2+) as cofactor.

It carries out the reaction adenosine(37) in tRNA + dimethylallyl diphosphate = N(6)-dimethylallyladenosine(37) in tRNA + diphosphate. Its function is as follows. Catalyzes the transfer of a dimethylallyl group onto the adenine at position 37 in tRNAs that read codons beginning with uridine, leading to the formation of N6-(dimethylallyl)adenosine (i(6)A). This is tRNA dimethylallyltransferase from Coxiella burnetii (strain CbuK_Q154) (Coxiella burnetii (strain Q154)).